A 639-amino-acid chain; its full sequence is ATP-dependent rRNA helicase spb4 (639 aa).

The Q motif signature appears at 14 to 42; the sequence is WEAVSPSLSEWVLDAVASWGFSKMTPVQA. One can recognise a Helicase ATP-binding domain in the interval 45-249; sequence IPLFMAHKDV…RVGLRNPVKV (205 aa). 58–65 is a binding site for ATP; it reads AVTGSGKT. A DEAD box motif is present at residues 197 to 200; the sequence is DEAD. One can recognise a Helicase C-terminal domain in the interval 283–437; that stretch reads TLRPILTSLQ…PISISDSDAS (155 aa). Positions 521–624 form a coiled coil; the sequence is AYKDKQREKR…LRRAEKAAGK (104 aa). The disordered stretch occupies residues 536–639; that stretch reads QESAEAGAQQ…GDDDEFEGFD (104 aa). Basic and acidic residues predominate over residues 575 to 622; sequence KHLQQEKRRWEKMTEEEKQKARETQKMLEEIRQKNEEARALRRAEKAA. Acidic residues predominate over residues 628–639; the sequence is NDGDDDEFEGFD.

Belongs to the DEAD box helicase family. DDX55/SPB4 subfamily. In terms of assembly, component of pre-60S ribosomal complexes.

The protein localises to the nucleus. It localises to the nucleolus. It catalyses the reaction ATP + H2O = ADP + phosphate + H(+). In terms of biological role, ATP-binding RNA helicase involved in the biogenesis of 60S ribosomal subunits. Binds 90S pre-ribosomal particles and dissociates from pre-60S ribosomal particles after processing of 27SB pre-rRNA. Required for the normal formation of 18S rRNA through the processing of pre-rRNAs at sites A0, A1 and A2, and the normal formation of 25S and 5.8S rRNAs through the processing of pre-rRNAs at sites C1 and C2. The chain is ATP-dependent rRNA helicase spb4 from Aspergillus terreus (strain NIH 2624 / FGSC A1156).